Consider the following 271-residue polypeptide: 3-methyl-2-oxobutanoate hydroxymethyltransferase (271 aa).

Aspartate 51 and aspartate 90 together coordinate Mg(2+). 3-methyl-2-oxobutanoate contacts are provided by residues 51 to 52 (DS), aspartate 90, and lysine 118. Mg(2+) is bound at residue glutamate 120. Glutamate 186 acts as the Proton acceptor in catalysis.

This sequence belongs to the PanB family. Homodecamer; pentamer of dimers. The cofactor is Mg(2+).

It is found in the cytoplasm. The enzyme catalyses 3-methyl-2-oxobutanoate + (6R)-5,10-methylene-5,6,7,8-tetrahydrofolate + H2O = 2-dehydropantoate + (6S)-5,6,7,8-tetrahydrofolate. The protein operates within cofactor biosynthesis; (R)-pantothenate biosynthesis; (R)-pantoate from 3-methyl-2-oxobutanoate: step 1/2. Its function is as follows. Catalyzes the reversible reaction in which hydroxymethyl group from 5,10-methylenetetrahydrofolate is transferred onto alpha-ketoisovalerate to form ketopantoate. The chain is 3-methyl-2-oxobutanoate hydroxymethyltransferase from Xanthomonas euvesicatoria pv. vesicatoria (strain 85-10) (Xanthomonas campestris pv. vesicatoria).